A 216-amino-acid chain; its full sequence is Probable disulfide bond formation protein D (216 aa).

The first 25 residues, 1–25, serve as a signal peptide directing secretion; that stretch reads MKSNKLMALGIVFSIAVLIVIGTIA. Cysteine 65 and cysteine 68 are joined by a disulfide.

It belongs to the thioredoxin family. DsbA subfamily.

Its function is as follows. May be required for disulfide bond formation in some proteins. This is Probable disulfide bond formation protein D (bdbD) from Bacillus cereus (strain ATCC 14579 / DSM 31 / CCUG 7414 / JCM 2152 / NBRC 15305 / NCIMB 9373 / NCTC 2599 / NRRL B-3711).